The following is a 124-amino-acid chain: Small ribosomal subunit protein uS12 (124 aa).

Asp-89 carries the post-translational modification 3-methylthioaspartic acid.

It belongs to the universal ribosomal protein uS12 family. Part of the 30S ribosomal subunit. Contacts proteins S8 and S17. May interact with IF1 in the 30S initiation complex.

Functionally, with S4 and S5 plays an important role in translational accuracy. In terms of biological role, interacts with and stabilizes bases of the 16S rRNA that are involved in tRNA selection in the A site and with the mRNA backbone. Located at the interface of the 30S and 50S subunits, it traverses the body of the 30S subunit contacting proteins on the other side and probably holding the rRNA structure together. The combined cluster of proteins S8, S12 and S17 appears to hold together the shoulder and platform of the 30S subunit. This is Small ribosomal subunit protein uS12 from Mannheimia succiniciproducens (strain KCTC 0769BP / MBEL55E).